The chain runs to 269 residues: Cytochrome c oxidase subunit 3 (269 aa).

Over 1-22 (MTNLIRSNFQDHPFHLVSPSPW) the chain is Mitochondrial matrix. Residues 23-41 (PLNTSVCLLNLTTTGALSM) traverse the membrane as a helical segment. The Mitochondrial intermembrane portion of the chain corresponds to 42–48 (HNFNNIH). Residues 49–73 (YLYYIALIGLVSAMFLWFRDIISEG) form a helical membrane-spanning segment. The Mitochondrial matrix portion of the chain corresponds to 74–80 (TFLGDHT). Residues 81 to 114 (LAVQRGLNLGIILFIVSEALFFLAIFWAFFHSAL) form a helical membrane-spanning segment. At 115–137 (TPTVELGAQWPPIGIEPVNPFEL) the chain is on the mitochondrial intermembrane side. A helical membrane pass occupies residues 138–161 (PLLNTVILLSSGATITYAHHALIK). Residues 162-164 (GER) are Mitochondrial matrix-facing. The chain crosses the membrane as a helical span at residues 165–188 (EGALYGSIATILLAIIFTGFQGVE). The Mitochondrial intermembrane portion of the chain corresponds to 189-201 (YSVSSFTISDGAF). Residues 202–230 (GTCFFFSTGFHGIHVIIGTIFLAVALWRI) form a helical membrane-spanning segment. Residues 231 to 248 (FAYHLTDNHHVGFEGGIL) lie on the Mitochondrial matrix side of the membrane. Residues 249–265 (YWHFVDVVWLFLYISVY) form a helical membrane-spanning segment. At 266–269 (YWGS) the chain is on the mitochondrial intermembrane side.

It belongs to the cytochrome c oxidase subunit 3 family. As to quaternary structure, component of the cytochrome c oxidase (complex IV, CIV), a multisubunit enzyme composed of 11 subunits. The complex is composed of a catalytic core of 3 subunits Cox1, Cox2 and Cox3, encoded in the mitochondrial DNA, and 8 supernumerary subunits Cox4, Cox5a/Cox5, Cox6, Cox7, Cox8, Cox7a/Cox9, Cox6b/Cox12 and Cox6a/Cox13, which are encoded in the nuclear genome. The complex exists as a monomer or a dimer and forms respiratory supercomplexes (SCs) in the inner mitochondrial membrane with NADH-ubiquinone oxidoreductase (complex I, CI) and ubiquinol-cytochrome c oxidoreductase (cytochrome b-c1 complex, complex III, CIII), resulting in various different assemblies (supercomplexes I(1)IV(1), I(1)III(3)IV(2), III(2)IV(1) and III(2)IV(2) as well as larger supercomplexes of compositions like I(1)III(2)IV(5-6)).

Its subcellular location is the mitochondrion inner membrane. The catalysed reaction is 4 Fe(II)-[cytochrome c] + O2 + 8 H(+)(in) = 4 Fe(III)-[cytochrome c] + 2 H2O + 4 H(+)(out). In terms of biological role, component of the cytochrome c oxidase, the last enzyme in the mitochondrial electron transport chain which drives oxidative phosphorylation. The respiratory chain contains 3 multisubunit complexes succinate dehydrogenase (complex II, CII), ubiquinol-cytochrome c oxidoreductase (cytochrome b-c1 complex, complex III, CIII) and cytochrome c oxidase (complex IV, CIV), that cooperate to transfer electrons derived from NADH and succinate to molecular oxygen, creating an electrochemical gradient over the inner membrane that drives transmembrane transport and the ATP synthase. Cytochrome c oxidase is the component of the respiratory chain that catalyzes the reduction of oxygen to water. Electrons originating from reduced cytochrome c in the intermembrane space (IMS) are transferred via the dinuclear copper A center (CU(A)) of Cox2 and heme A of Cox1 to the active site in Cox1, a binuclear center (BNC) formed by heme A3 and copper B (CU(B)). The BNC reduces molecular oxygen to 2 water molecules using 4 electrons from cytochrome c in the IMS and 4 protons from the mitochondrial matrix. This Neurospora crassa (strain ATCC 24698 / 74-OR23-1A / CBS 708.71 / DSM 1257 / FGSC 987) protein is Cytochrome c oxidase subunit 3 (cox-3).